The following is a 37-amino-acid chain: Large ribosomal subunit protein bL36 (37 aa).

The protein belongs to the bacterial ribosomal protein bL36 family.

The polypeptide is Large ribosomal subunit protein bL36 (Streptomyces griseus subsp. griseus (strain JCM 4626 / CBS 651.72 / NBRC 13350 / KCC S-0626 / ISP 5235)).